We begin with the raw amino-acid sequence, 112 residues long: Dolichyl-diphosphooligosaccharide--protein glycosyltransferase subunit DAD1 (112 aa).

Topologically, residues 1 to 27 (MVELSSVISKFYNDYVQNTPKKLKLVD) are cytoplasmic. A helical membrane pass occupies residues 28 to 48 (IYLGYILLTGIIQFVYCCLVG). At 49–51 (TFP) the chain is on the lumenal side. Residues 52–72 (FNSFLSGFISTVSCFVLAVCL) form a helical membrane-spanning segment. Residues 73 to 91 (RLQANPQNKSVFAGISPER) lie on the Cytoplasmic side of the membrane. A helical membrane pass occupies residues 92–112 (GFADFIFAHVILHLVVMNFIG).

It belongs to the DAD/OST2 family. In terms of assembly, component of the oligosaccharyltransferase (OST) complex.

The protein resides in the endoplasmic reticulum membrane. The protein operates within protein modification; protein glycosylation. Subunit of the oligosaccharyl transferase (OST) complex that catalyzes the initial transfer of a defined glycan (Glc(3)Man(9)GlcNAc(2) in eukaryotes) from the lipid carrier dolichol-pyrophosphate to an asparagine residue within an Asn-X-Ser/Thr consensus motif in nascent polypeptide chains, the first step in protein N-glycosylation. N-glycosylation occurs cotranslationally and the complex associates with the Sec61 complex at the channel-forming translocon complex that mediates protein translocation across the endoplasmic reticulum (ER). All subunits are required for a maximal enzyme activity. Probably as part of the N-glycosylation pathway, plays a role in the regulation of tissue growth and apoptosis. This chain is Dolichyl-diphosphooligosaccharide--protein glycosyltransferase subunit DAD1, found in Drosophila melanogaster (Fruit fly).